Here is a 501-residue protein sequence, read N- to C-terminus: 2,3-bisphosphoglycerate-independent phosphoglycerate mutase (501 aa).

Mn(2+) contacts are provided by Asp12 and Ser62. The active-site Phosphoserine intermediate is the Ser62. Residues His121, 150 to 151 (RD), Arg182, Arg188, 253 to 256 (RSDR), and Lys323 contribute to the substrate site. Mn(2+) contacts are provided by Asp390, His394, Asp431, His432, and His450.

The protein belongs to the BPG-independent phosphoglycerate mutase family. As to quaternary structure, monomer. Mn(2+) serves as cofactor.

It catalyses the reaction (2R)-2-phosphoglycerate = (2R)-3-phosphoglycerate. Its pathway is carbohydrate degradation; glycolysis; pyruvate from D-glyceraldehyde 3-phosphate: step 3/5. Catalyzes the interconversion of 2-phosphoglycerate and 3-phosphoglycerate. This chain is 2,3-bisphosphoglycerate-independent phosphoglycerate mutase, found in Ehrlichia canis (strain Jake).